The primary structure comprises 117 residues: Large ribosomal subunit protein bL20 (117 aa).

Belongs to the bacterial ribosomal protein bL20 family.

In terms of biological role, binds directly to 23S ribosomal RNA and is necessary for the in vitro assembly process of the 50S ribosomal subunit. It is not involved in the protein synthesizing functions of that subunit. This chain is Large ribosomal subunit protein bL20, found in Rickettsia rickettsii (strain Iowa).